The chain runs to 143 residues: Probable FAD-linked sulfhydryl oxidase R368 (143 aa).

The 95-residue stretch at 10 to 104 (GWTFSHAVAL…YPEAIEAIEK (95 aa)) folds into the ERV/ALR sulfhydryl oxidase domain. Cys46 and Cys49 are disulfide-bonded. A helical transmembrane segment spans residues 117-137 (FFIILIIIGIIVIIYLMYIVF).

The cofactor is FAD.

It localises to the membrane. It carries out the reaction 2 R'C(R)SH + O2 = R'C(R)S-S(R)CR' + H2O2. Functionally, FAD-dependent sulfhydryl oxidase that catalyzes disulfide bond formation. In Acanthamoeba polyphaga mimivirus (APMV), this protein is Probable FAD-linked sulfhydryl oxidase R368.